The primary structure comprises 323 residues: ADP-L-glycero-D-manno-heptose-6-epimerase (323 aa).

Residues 10–11, 31–32, Lys38, Lys53, 75–79, and Asn92 contribute to the NADP(+) site; these read FI, DN, and EGACS. Tyr139 serves as the catalytic Proton acceptor. Lys143 provides a ligand contact to NADP(+). Residue Asn168 participates in substrate binding. Residues Val169 and Lys177 each contribute to the NADP(+) site. Catalysis depends on Lys177, which acts as the Proton acceptor. Residues Asp179, Lys186, 200–203, Arg213, and Tyr277 contribute to the substrate site; that span reads FGAY.

This sequence belongs to the NAD(P)-dependent epimerase/dehydratase family. HldD subfamily. As to quaternary structure, homopentamer. Requires NADP(+) as cofactor.

It carries out the reaction ADP-D-glycero-beta-D-manno-heptose = ADP-L-glycero-beta-D-manno-heptose. It participates in nucleotide-sugar biosynthesis; ADP-L-glycero-beta-D-manno-heptose biosynthesis; ADP-L-glycero-beta-D-manno-heptose from D-glycero-beta-D-manno-heptose 7-phosphate: step 4/4. Its function is as follows. Catalyzes the interconversion between ADP-D-glycero-beta-D-manno-heptose and ADP-L-glycero-beta-D-manno-heptose via an epimerization at carbon 6 of the heptose. This chain is ADP-L-glycero-D-manno-heptose-6-epimerase, found in Hydrogenovibrio crunogenus (strain DSM 25203 / XCL-2) (Thiomicrospira crunogena).